The following is a 222-amino-acid chain: Large ribosomal subunit protein mL64 (222 aa).

Disordered regions lie at residues 1–51 (MAAP…PRWQ), 136–170 (RRQQQARREKAQADKERRARLQAEAQERLGYHVDP), and 182–222 (LEKQ…TPDS). Basic and acidic residues predominate over residues 141–170 (ARREKAQADKERRARLQAEAQERLGYHVDP). Residues 144–213 (EKAQADKERR…AAMAAAAAQD (70 aa)) adopt a coiled-coil conformation. Positions 184–200 (KQHRKRLKEEKQRKKKE) match the Nuclear localization signal motif. Positions 203 to 212 (AAAMAAAAAQ) are enriched in low complexity.

Belongs to the mitochondrion-specific ribosomal protein mL64 family. Component of the mitochondrial ribosome large subunit (39S) which comprises a 16S rRNA and about 50 distinct proteins. Interacts with GADD45A, GADD45B and GADD45G. Interacts with NR4A1 via the NR4A1 AB domain. Interacts with ATAD3A and ATAD3B.

The protein localises to the mitochondrion. Its subcellular location is the nucleus. Its function is as follows. Acts as a negative regulator of G1 to S cell cycle phase progression by inhibiting cyclin-dependent kinases. Inhibitory effects are additive with GADD45 proteins but also occur in the absence of GADD45 proteins. Acts as a repressor of the orphan nuclear receptor NR4A1 by inhibiting AB domain-mediated transcriptional activity. May be involved in the hormone-mediated regulation of NR4A1 transcriptional activity. May play a role in mitochondrial protein synthesis. The chain is Large ribosomal subunit protein mL64 (GADD45GIP1) from Bos taurus (Bovine).